The primary structure comprises 405 residues: Argininosuccinate synthase (405 aa).

Residues 10–18 and Ala37 contribute to the ATP site; that span reads AYSGGLDTS. Tyr88 and Ser93 together coordinate L-citrulline. Gly118 provides a ligand contact to ATP. Thr120, Asn124, and Asp125 together coordinate L-aspartate. Asn124 is a binding site for L-citrulline. L-citrulline is bound by residues Arg128, Ser179, Ser188, Glu264, and Tyr276.

Belongs to the argininosuccinate synthase family. Type 1 subfamily. In terms of assembly, homotetramer.

It is found in the cytoplasm. The catalysed reaction is L-citrulline + L-aspartate + ATP = 2-(N(omega)-L-arginino)succinate + AMP + diphosphate + H(+). Its pathway is amino-acid biosynthesis; L-arginine biosynthesis; L-arginine from L-ornithine and carbamoyl phosphate: step 2/3. This chain is Argininosuccinate synthase, found in Stutzerimonas stutzeri (strain A1501) (Pseudomonas stutzeri).